Reading from the N-terminus, the 312-residue chain is Methionyl-tRNA formyltransferase (312 aa).

(6S)-5,6,7,8-tetrahydrofolate is bound at residue 109–112 (SLLP).

This sequence belongs to the Fmt family.

It carries out the reaction L-methionyl-tRNA(fMet) + (6R)-10-formyltetrahydrofolate = N-formyl-L-methionyl-tRNA(fMet) + (6S)-5,6,7,8-tetrahydrofolate + H(+). In terms of biological role, attaches a formyl group to the free amino group of methionyl-tRNA(fMet). The formyl group appears to play a dual role in the initiator identity of N-formylmethionyl-tRNA by promoting its recognition by IF2 and preventing the misappropriation of this tRNA by the elongation apparatus. The protein is Methionyl-tRNA formyltransferase of Listeria monocytogenes serotype 4a (strain HCC23).